Reading from the N-terminus, the 640-residue chain is Chitin elicitor receptor kinase 1 (640 aa).

An N-terminal signal peptide occupies residues 1-31 (MKFQMKMKSELCRTYKYWLILLVLWLSGVTQ). The Extracellular portion of the chain corresponds to 32-248 (RETGVLIVDA…GTVHWRSNVG (217 aa)). Intrachain disulfides connect Cys-43–Cys-104, Cys-49–Cys-166, and Cys-102–Cys-164. LysM domains follow at residues 53 to 98 (AYYR…NIYL), 113 to 160 (FSYT…SLTI), and 179 to 227 (STYV…KAAN). Chitin contacts are provided by residues 119 to 125 (TNDTAEK) and 148 to 154 (DLSSIYS). Residues 249-269 (IIVGVVVGGIVLAVLLLFALI) form a helical membrane-spanning segment. At 270–640 (FGFKHFRRRK…SQPPSGNDQL (371 aa)) the chain is on the cytoplasmic side. The tract at residues 286-308 (MQQSGLLSSSSMAGSKPSRSGST) is disordered. Over residues 289–307 (SGLLSSSSMAGSKPSRSGS) the composition is skewed to low complexity. The Protein kinase domain maps to 330–612 (FSLAKKIGQG…RFAVVQLMTL (283 aa)). ATP contacts are provided by residues 336-344 (IGQGGFASV) and Lys-357. The Proton acceptor role is filled by Asp-452.

This sequence belongs to the protein kinase superfamily. Ser/Thr protein kinase family.

It localises to the cell membrane. The catalysed reaction is L-seryl-[protein] + ATP = O-phospho-L-seryl-[protein] + ADP + H(+). It catalyses the reaction L-threonyl-[protein] + ATP = O-phospho-L-threonyl-[protein] + ADP + H(+). Its function is as follows. Lysin motif (LysM) receptor kinase required as a cell surface receptor for chitin elicitor (chitooligosaccharides) signaling leading to innate immunity in response to biotic stresses. The CERK1, MEKK1a/b, MKK1a/b/c and MPK4a/b proteins are involved in pathogen defense. The pathway induces rapid growth inhibition, cell wall depositions and accumulation of defense-related transcripts. This protein is required for response to chitin. Is able to complement the A.thaliana cerk1 mutant. The chain is Chitin elicitor receptor kinase 1 from Physcomitrium patens (Spreading-leaved earth moss).